A 684-amino-acid polypeptide reads, in one-letter code: Glycine--tRNA ligase beta subunit (684 aa).

This sequence belongs to the class-II aminoacyl-tRNA synthetase family. In terms of assembly, tetramer of two alpha and two beta subunits.

It is found in the cytoplasm. The catalysed reaction is tRNA(Gly) + glycine + ATP = glycyl-tRNA(Gly) + AMP + diphosphate. The chain is Glycine--tRNA ligase beta subunit from Pseudomonas syringae pv. tomato (strain ATCC BAA-871 / DC3000).